Here is a 378-residue protein sequence, read N- to C-terminus: Erythronate-4-phosphate dehydrogenase (378 aa).

S45 and T66 together coordinate substrate. D146 and T175 together coordinate NAD(+). R208 is a catalytic residue. NAD(+) is bound at residue D232. Residue E237 is part of the active site. H254 functions as the Proton donor in the catalytic mechanism. G257 is an NAD(+) binding site. Y258 provides a ligand contact to substrate.

The protein belongs to the D-isomer specific 2-hydroxyacid dehydrogenase family. PdxB subfamily. Homodimer.

The protein resides in the cytoplasm. The catalysed reaction is 4-phospho-D-erythronate + NAD(+) = (R)-3-hydroxy-2-oxo-4-phosphooxybutanoate + NADH + H(+). Its pathway is cofactor biosynthesis; pyridoxine 5'-phosphate biosynthesis; pyridoxine 5'-phosphate from D-erythrose 4-phosphate: step 2/5. Its function is as follows. Catalyzes the oxidation of erythronate-4-phosphate to 3-hydroxy-2-oxo-4-phosphonooxybutanoate. The polypeptide is Erythronate-4-phosphate dehydrogenase (Escherichia coli O45:K1 (strain S88 / ExPEC)).